We begin with the raw amino-acid sequence, 142 residues long: Transcription antitermination protein NusB (142 aa).

The protein belongs to the NusB family.

Its function is as follows. Involved in transcription antitermination. Required for transcription of ribosomal RNA (rRNA) genes. Binds specifically to the boxA antiterminator sequence of the ribosomal RNA (rrn) operons. In Streptococcus mutans serotype c (strain ATCC 700610 / UA159), this protein is Transcription antitermination protein NusB.